We begin with the raw amino-acid sequence, 280 residues long: 2-dehydro-3-deoxyphosphooctonate aldolase (280 aa).

It belongs to the KdsA family.

It is found in the cytoplasm. The catalysed reaction is D-arabinose 5-phosphate + phosphoenolpyruvate + H2O = 3-deoxy-alpha-D-manno-2-octulosonate-8-phosphate + phosphate. It participates in carbohydrate biosynthesis; 3-deoxy-D-manno-octulosonate biosynthesis; 3-deoxy-D-manno-octulosonate from D-ribulose 5-phosphate: step 2/3. It functions in the pathway bacterial outer membrane biogenesis; lipopolysaccharide biosynthesis. The chain is 2-dehydro-3-deoxyphosphooctonate aldolase from Coxiella burnetii (strain CbuK_Q154) (Coxiella burnetii (strain Q154)).